The chain runs to 308 residues: Aspartate carbamoyltransferase catalytic subunit (308 aa).

Residues arginine 55 and threonine 56 each coordinate carbamoyl phosphate. L-aspartate is bound at residue lysine 83. Carbamoyl phosphate contacts are provided by arginine 105, histidine 133, and glutamine 136. L-aspartate contacts are provided by arginine 166 and arginine 220. 2 residues coordinate carbamoyl phosphate: glycine 261 and proline 262.

It belongs to the aspartate/ornithine carbamoyltransferase superfamily. ATCase family. As to quaternary structure, heterododecamer (2C3:3R2) of six catalytic PyrB chains organized as two trimers (C3), and six regulatory PyrI chains organized as three dimers (R2).

The catalysed reaction is carbamoyl phosphate + L-aspartate = N-carbamoyl-L-aspartate + phosphate + H(+). Its pathway is pyrimidine metabolism; UMP biosynthesis via de novo pathway; (S)-dihydroorotate from bicarbonate: step 2/3. In terms of biological role, catalyzes the condensation of carbamoyl phosphate and aspartate to form carbamoyl aspartate and inorganic phosphate, the committed step in the de novo pyrimidine nucleotide biosynthesis pathway. The chain is Aspartate carbamoyltransferase catalytic subunit from Chlorobaculum tepidum (strain ATCC 49652 / DSM 12025 / NBRC 103806 / TLS) (Chlorobium tepidum).